The chain runs to 362 residues: GMP reductase (362 aa).

NADP(+) contacts are provided by residues S26–R27, K78, D129–A131, and I180–G181. K(+) contacts are provided by G181, G183, and C186. The active-site Thioimidate intermediate is the C186. The active-site Proton donor/acceptor is the T188. R189 contacts K(+). Residues D219–G221, G242–G243, G268–S270, and R286–G290 each bind GMP. Residues M269, Y285–R286, and S314–T317 each bind NADP(+).

This sequence belongs to the IMPDH/GMPR family.

The enzyme catalyses IMP + NH4(+) + NADP(+) = GMP + NADPH + 2 H(+). Functionally, catalyzes the irreversible NADPH-dependent deamination of GMP to IMP. It functions in the conversion of nucleobase, nucleoside and nucleotide derivatives of G to A nucleotides, and in maintaining the intracellular balance of A and G nucleotides. This is GMP reductase from Phytophthora infestans (Potato late blight agent).